Reading from the N-terminus, the 367-residue chain is MNLLTTRIDLDAIAHNTRLLKNRVGAAKLMAVVKADGYNHGMDRVAPVMAANGADAFGVATIAEALALRATGITTPILCWIWSPEQDWAAAVEAGIDLAVISPRHARVLVDAPPTSRAIRVSVKVDTALHRSGVDEQDWDAVFTLLRDCGHIEVTGLFTHLSCADEPGNPETDHQAETFRRAIDRARALGLEVPENHLCNSPATLTRPDLHMDMVRPGVALYGLEPIPGLDHGLRPAMTWAGAITVVKPIRKGEGTSYGLTWRAEADGFVAVVPAGYADGVPRAAQDHLRVHVNGHDYPQVGRVCMDQFVIFLGDNPHGVTAGDEAVIFGGTGMSATELADALATINYEVICRPTGRTVRDYTGEGK.

K34 (proton acceptor; specific for D-alanine) is an active-site residue. At K34 the chain carries N6-(pyridoxal phosphate)lysine. Substrate is bound at residue R131. Y258 functions as the Proton acceptor; specific for L-alanine in the catalytic mechanism. M306 lines the substrate pocket.

It belongs to the alanine racemase family. The cofactor is pyridoxal 5'-phosphate.

It catalyses the reaction L-alanine = D-alanine. Its pathway is amino-acid biosynthesis; D-alanine biosynthesis; D-alanine from L-alanine: step 1/1. Catalyzes the interconversion of L-alanine and D-alanine. May also act on other amino acids. This is Alanine racemase (alr) from Corynebacterium efficiens (strain DSM 44549 / YS-314 / AJ 12310 / JCM 11189 / NBRC 100395).